Here is a 385-residue protein sequence, read N- to C-terminus: Probable nitrate transporter NarT (385 aa).

The next 12 membrane-spanning stretches (helical) occupy residues 14–34 (TLSL…MPYI), 47–67 (IILA…GYLT), 69–89 (IIGA…PIFF), 97–117 (GMLM…SVGV), 139–159 (GNIG…IIGW), 161–181 (TTVR…FIFG), 205–225 (LYYL…FGLF), 246–266 (GVFI…GDKF), 277–297 (IIMI…LFTI), 302–322 (ISIC…SYFA), 330–350 (GIVS…ITYV), and 359–379 (LAFI…GHLY).

Belongs to the major facilitator superfamily. Nitrate/nitrite porter (TC 2.A.1.8) family.

It is found in the cell membrane. Its function is as follows. Probably required for nitrate uptake under anoxic conditions. Also possibly involved in excretion of nitrite produced by the dissimilatory reduction of nitrate. This chain is Probable nitrate transporter NarT (narT), found in Staphylococcus haemolyticus (strain JCSC1435).